Here is a 598-residue protein sequence, read N- to C-terminus: Biotin-dependent acyl-coenzyme A carboxylase alpha3 subunit (598 aa).

Positions 8–452 constitute a Biotin carboxylation domain; the sequence is RIAKVLVANR…SFSVHTRWIE (445 aa). An ATP-grasp domain is found at 127–324; it reads RHIAARAQAP…LVLQQFKIAN (198 aa). 155-216 is an ATP binding site; that stretch reads AKEHGVPIAI…ERYLDKPRHV (62 aa). Glutamate 282, glutamate 295, and asparagine 297 together coordinate Mg(2+). Residues glutamate 282, glutamate 295, and asparagine 297 each coordinate Mn(2+). Positions 506 to 531 are disordered; the sequence is PAGVIRKKPKPRKRGGHTGAATSGDA. A compositionally biased stretch (basic residues) spans 510–521; sequence IRKKPKPRKRGG. The 77-residue stretch at 522–598 folds into the Biotinyl-binding domain; sequence HTGAATSGDA…TQGTVLAEIK (77 aa). Residue lysine 564 is modified to N6-biotinyllysine.

As to quaternary structure, the biotin-dependent acyl-CoA carboxylase complex is composed of AccA3, which contains the biotin carboxylase (BC) and biotin carboxyl carrier protein (BCCP) domains, and an AccD protein, which contains the carboxyl transferase (CT) domain. Mg(2+) serves as cofactor. It depends on Mn(2+) as a cofactor. Biotin is required as a cofactor.

It carries out the reaction N(6)-biotinyl-L-lysyl-[protein] + hydrogencarbonate + ATP = N(6)-carboxybiotinyl-L-lysyl-[protein] + ADP + phosphate + H(+). It participates in lipid metabolism; fatty acid biosynthesis. Its pathway is lipid metabolism; mycolic acid biosynthesis. In terms of biological role, component of a biotin-dependent acyl-CoA carboxylase complex. This subunit catalyzes the ATP-dependent carboxylation of the biotin carried by the biotin carboxyl carrier (BCC) domain, resulting in the formation of carboxyl biotin. This chain is Biotin-dependent acyl-coenzyme A carboxylase alpha3 subunit (bccA), found in Mycobacterium leprae (strain TN).